A 523-amino-acid chain; its full sequence is Transcription initiation factor TFIID subunit 4 (523 aa).

Disordered regions lie at residues 1–100 and 185–241; these read MSLP…AASD and ASVE…VQGG. Residues 58-77 show a composition bias toward low complexity; sequence QMQPPRQPIQQQMQHFQSPS. Residues 78-87 show a composition bias toward pro residues; the sequence is PMAPQGPPGT. The 99-residue stretch at 101 to 199 folds into the TAFH domain; that stretch reads DKNVTKCVRF…VNPPPGYVFN (99 aa). A compositionally biased stretch (pro residues) spans 204–213; the sequence is PGPPQPPPPQ. Positions 214 to 236 are enriched in low complexity; it reads QQSQQQPPLEMRQIPNPNQIPPQ. The segment at 329–383 is histone-fold; it reads LKPDEVLNRITKRMMSSCSVEEEALVAISDAVESHLRELITLMAGVAEHRVESLR. A necessary and sufficient for interaction with oma-1 region spans residues 333-382; the sequence is EVLNRITKRMMSSCSVEEEALVAISDAVESHLRELITLMAGVAEHRVESL. Residues 407–435 are disordered; that stretch reads QEEELRESREKESLIRMSKNKNSGKETIE.

Belongs to the TAF4 family. In terms of assembly, component of the TFIID basal transcription factor complex, composed of TATA-box-binding protein tbp-1, and a number of TBP-associated factors (TAFs). Interacts (via histone-fold domain) with oma-1 (via histone-fold domain). May also interact with oma-2. Interacts (via histone-fold domain) with taf-12 (via the histone-fold domain).

The protein resides in the nucleus. The protein localises to the cytoplasm. In terms of biological role, the TFIID basal transcription factor complex plays a major role in the initiation of RNA polymerase II (Pol II)-dependent transcription. TFIID recognizes and binds promoters via its subunit tbp-1, a TATA-box-binding protein, and promotes assembly of the pre-initiation complex (PIC). The TFIID complex consists of tbp-1 and TBP-associated factors (TAFs), including taf-4. Essential for early embryonic development, probably acting via activating transcription initiation by RNA polymerase II, as part of the TFIID complex. In early embryos, but not oocytes, remains, presumably inactive, in the cytoplasm as a result of binding to oma-1. Upon degradation of oma-1, taf-4 is released and bound by taf-12, and the taf-4/12 heterodimer translocates to the nucleus and transcriptional repression is relieved. Involved in lifespan extension in a manner dependent upon mitochondrial function. Plays a role in modulating polyribosome formation. The polypeptide is Transcription initiation factor TFIID subunit 4 (Caenorhabditis elegans).